The following is a 394-amino-acid chain: Elongation factor Tu (394 aa).

In terms of domain architecture, tr-type G spans 10 to 204 (KPHVNVGTIG…ALDTYIPEPE (195 aa)). The G1 stretch occupies residues 19–26 (GHVDHGKT). Residue 19-26 (GHVDHGKT) coordinates GTP. Thr-26 lines the Mg(2+) pocket. A G2 region spans residues 60-64 (GITIN). Residues 81 to 84 (DCPG) form a G3 region. Residues 81-85 (DCPGH) and 136-139 (NKCD) contribute to the GTP site. The segment at 136–139 (NKCD) is G4. Positions 174–176 (SAL) are G5.

Belongs to the TRAFAC class translation factor GTPase superfamily. Classic translation factor GTPase family. EF-Tu/EF-1A subfamily. Monomer.

Its subcellular location is the cytoplasm. The catalysed reaction is GTP + H2O = GDP + phosphate + H(+). Its function is as follows. GTP hydrolase that promotes the GTP-dependent binding of aminoacyl-tRNA to the A-site of ribosomes during protein biosynthesis. In Colwellia psychrerythraea (strain 34H / ATCC BAA-681) (Vibrio psychroerythus), this protein is Elongation factor Tu.